The chain runs to 245 residues: Protein FAM133B (245 aa).

Disordered regions lie at residues 19–38 (SRGP…NRPR) and 69–245 (WKKE…SDSP). A compositionally biased stretch (basic and acidic residues) spans 69–80 (WKKELEKHREKL). Serine 82 carries the post-translational modification Phosphoserine. A compositionally biased stretch (basic residues) spans 89-102 (KKRQKKKKEKKKSG). A compositionally biased stretch (low complexity) spans 103–119 (RYSSSSSSSSDSSSSSS). Positions 128 to 140 (QTKRRKKKKSHCH) are enriched in basic residues. A compositionally biased stretch (basic and acidic residues) spans 165–176 (KDITEREKDTKG). Phosphoserine is present on residues serine 190, serine 191, serine 193, and serine 195. Residues 209–219 (SGEERERTTDK) show a composition bias toward basic and acidic residues. Residues 220 to 237 (AKKRRKHKKHSKKKKKKA) show a composition bias toward basic residues.

This sequence belongs to the FAM133 family.

The chain is Protein FAM133B (Fam133b) from Rattus norvegicus (Rat).